The chain runs to 373 residues: 4-hydroxy-3-methylbut-2-en-1-yl diphosphate synthase (flavodoxin) (373 aa).

Residues Cys270, Cys273, Cys305, and Glu312 each coordinate [4Fe-4S] cluster.

This sequence belongs to the IspG family. [4Fe-4S] cluster is required as a cofactor.

It catalyses the reaction (2E)-4-hydroxy-3-methylbut-2-enyl diphosphate + oxidized [flavodoxin] + H2O + 2 H(+) = 2-C-methyl-D-erythritol 2,4-cyclic diphosphate + reduced [flavodoxin]. The protein operates within isoprenoid biosynthesis; isopentenyl diphosphate biosynthesis via DXP pathway; isopentenyl diphosphate from 1-deoxy-D-xylulose 5-phosphate: step 5/6. Its function is as follows. Converts 2C-methyl-D-erythritol 2,4-cyclodiphosphate (ME-2,4cPP) into 1-hydroxy-2-methyl-2-(E)-butenyl 4-diphosphate. The protein is 4-hydroxy-3-methylbut-2-en-1-yl diphosphate synthase (flavodoxin) of Sodalis glossinidius (strain morsitans).